We begin with the raw amino-acid sequence, 237 residues long: CD99 antigen-like protein 2 (237 aa).

A signal peptide spans 1-25 (MVARLTAFLVCLVFSLATLVQRGYG). At 26-161 (DTDGFNLEDA…PGSGISTETG (136 aa)) the chain is on the extracellular side. Residues 47–157 (DHFSTTTRRP…SNDDPGSGIS (111 aa)) are disordered. Low complexity-rich tracts occupy residues 51-66 (TTTRRPVTTRAPANPA) and 74-84 (TTTTRRPGTTR). The segment covering 102–111 (DDRNDLDGPK) has biased composition (basic and acidic residues). O-linked (Xyl...) (chondroitin sulfate) serine glycosylation occurs at S154. A helical transmembrane segment spans residues 162–182 (TIAGVASALAMALIGAVSSYI). Residues 183–237 (SYQQKKFCFSIQQGLNADYVKGENLEAVVCEEPQVTYSKQETQSAEPPPPEPPRI) lie on the Cytoplasmic side of the membrane. A compositionally biased stretch (polar residues) spans 218 to 227 (TYSKQETQSA). The interval 218–237 (TYSKQETQSAEPPPPEPPRI) is disordered. A compositionally biased stretch (pro residues) spans 228-237 (EPPPPEPPRI).

It belongs to the CD99 family. Post-translationally, O-glycosylated. Highly expressed in the nervous system, including brain, dentate nucleus of hippocampus, granular and Purkinje cells of cerebellum, brain stem nucleus and choroid plexus. Expressed in peripheral blood T- and B-cells and neutrophils (at protein level). Almost undetectable in bone marrow-derived neutrophils (at protein level). Also expressed in thymocytes (at protein level) with higher expression in cortical thymocytes than in medullary thymocytes. Expressed at high levels in testis (mostly in germ cells and Sertoli cells) and ovary (mostly in granulosa cells). Expressed in lung, heart, kidney and liver (at protein level); however, expression in heart, kidney and liver seems restricted to endothelial cells (at protein level). Highly expressed in endothelial cells and to a lower level in vascular smooth muscle cells (at protein level). Low expression in spleen.

Its subcellular location is the cell membrane. The protein localises to the cell junction. It is found in the secreted. Its function is as follows. Plays a role in a late step of leukocyte extravasation helping cells to overcome the endothelial basement membrane. Acts at the same site as, but independently of, PECAM1. Homophilic adhesion molecule, but these interactions may not be required for cell aggregation. This is CD99 antigen-like protein 2 (Cd99l2) from Mus musculus (Mouse).